Reading from the N-terminus, the 941-residue chain is Heat shock protein 70 homolog (941 aa).

A disordered region spans residues 851–887 (ENQPDIPEDSEDSESEDDTTTSKDSESSEITENLALP). The span at 856-869 (IPEDSEDSESEDDT) shows a compositional bias: acidic residues.

This sequence belongs to the heat shock protein 70 family.

In terms of biological role, probable chaperone. This chain is Heat shock protein 70 homolog, found in Acanthamoeba polyphaga (Amoeba).